Reading from the N-terminus, the 608-residue chain is Isocitrate dehydrogenase kinase/phosphatase (608 aa).

Residues 327 to 333 (APGIKGL) and Lys-348 contribute to the ATP site. The active site involves Asp-383.

This sequence belongs to the AceK family.

It is found in the cytoplasm. The catalysed reaction is L-seryl-[isocitrate dehydrogenase] + ATP = O-phospho-L-seryl-[isocitrate dehydrogenase] + ADP + H(+). Functionally, bifunctional enzyme which can phosphorylate or dephosphorylate isocitrate dehydrogenase (IDH) on a specific serine residue. This is a regulatory mechanism which enables bacteria to bypass the Krebs cycle via the glyoxylate shunt in response to the source of carbon. When bacteria are grown on glucose, IDH is fully active and unphosphorylated, but when grown on acetate or ethanol, the activity of IDH declines drastically concomitant with its phosphorylation. This is Isocitrate dehydrogenase kinase/phosphatase from Burkholderia ambifaria (strain ATCC BAA-244 / DSM 16087 / CCUG 44356 / LMG 19182 / AMMD) (Burkholderia cepacia (strain AMMD)).